The following is a 582-amino-acid chain: External alternative NAD(P)H-ubiquinone oxidoreductase B4, mitochondrial (582 aa).

Residues 1-39 (MSFHSFYQRASSLFKAYPSTSKILLLSTFSGGGGVLVYS) constitute a mitochondrion transit peptide. Position 65-95 (65-95 (KVVVLGSGWSGYSFLSYLNNPNYDVQVVSPR)) interacts with FAD. 227–263 (LHFVVVGGGPTGVEFSAELHDFLVQDVAKIYPKVQEF) contributes to the NAD(+) binding site. The 36-residue stretch at 384-419 (RVMEDIAAIFNKADKGNTGTLKKKDFNSVVKDICQR) folds into the EF-hand domain. Ca(2+) is bound by residues aspartate 397, threonine 401, threonine 403, and aspartate 408. A Microbody targeting signal motif is present at residues 573–582 (FVFGRDSSSI).

The protein belongs to the NADH dehydrogenase family. FAD is required as a cofactor. In terms of tissue distribution, expressed in seedlings, roots, cotyledons, stems, buds and flowers and, to a lower extent, in stems and leaves.

It is found in the mitochondrion inner membrane. It localises to the peroxisome. It carries out the reaction a quinone + NADH + H(+) = a quinol + NAD(+). The catalysed reaction is a ubiquinone + NADH + H(+) = a ubiquinol + NAD(+). With respect to regulation, no effect of calcium ions on activity. In terms of biological role, alternative NADH-ubiquinone oxidoreductase which catalyzes the oxidation of mitochondrial NADH does not translocate protons across the inner mitochondrial membrane. NAD(P)H dehydrogenase; more efficient on NADH. The polypeptide is External alternative NAD(P)H-ubiquinone oxidoreductase B4, mitochondrial (NDB4) (Arabidopsis thaliana (Mouse-ear cress)).